Reading from the N-terminus, the 514-residue chain is Nuclear hormone receptor family member nhr-85 (514 aa).

Residues 28 to 48 form a disordered region; that stretch reads TSFSSPPATSSSSLLSPSPSS. The segment at residues 110–186 is a DNA-binding region (nuclear receptor); it reads TILCQVCSDK…VGMSRDAVRF (77 aa). 2 consecutive NR C4-type zinc fingers follow at residues 113–133 and 150–174; these read CQVC…CEGC and CTRA…LKKC. An NR LBD domain is found at 216–514; the sequence is QYENLTEVMH…VSPVPTTLSE (299 aa). The tract at residues 465-514 is disordered; sequence ERPRRISSSGAQEPLNLSLPHVRHQVKRDVDSDEQLEEMKVSPVPTTLSE.

Belongs to the nuclear hormone receptor family.

It is found in the nucleus. In terms of biological role, orphan nuclear receptor. In Caenorhabditis elegans, this protein is Nuclear hormone receptor family member nhr-85 (nhr-85).